A 70-amino-acid chain; its full sequence is MKADIHPNYVEIDATCSCGNVIKTRSTIGKNISLDVCSECHPFYTGKQKVLDTGGRIDRFKQRFGVFGAK.

Positions 16, 18, 37, and 40 each coordinate Zn(2+).

It belongs to the bacterial ribosomal protein bL31 family. Type A subfamily. Part of the 50S ribosomal subunit. Zn(2+) is required as a cofactor.

Its function is as follows. Binds the 23S rRNA. The protein is Large ribosomal subunit protein bL31 of Ectopseudomonas mendocina (strain ymp) (Pseudomonas mendocina).